A 343-amino-acid polypeptide reads, in one-letter code: Ubiquitin thioesterase OTU1 (343 aa).

A UBX-like region spans residues 45 to 123; sequence RCKAKGGTHV…IVEEDQTRPK (79 aa). An OTU domain is found at 144 to 269; that stretch reads LTRTAVPADN…GIHYDPLQRN (126 aa). The cys-loop stretch occupies residues 149-155; the sequence is VPADNSC. Asp-152 is an active-site residue. Cys-155 (nucleophile) is an active-site residue. The variable-loop stretch occupies residues 208–218; that stretch reads IRRDDTWGGAI. Positions 258–262 are his-loop; it reads YDGIH. Residue Ile-261 coordinates substrate. His-262 is an active-site residue. The interval 286 to 291 is S2 site; sequence DIVLVQ. Residues 313-337 form a C2H2-type zinc finger; the sequence is LRCMLCQKGLTGQAEARDHARETGH. His-337 is a catalytic residue.

In terms of assembly, interacts with VCP; the interaction is direct. Interacts with FAF2/UBXD8. Interacts with DERL1; however interaction is dependent on the UBAX-like region, suggesting that it may be indirect. Interacts with PLAA, UBXN6 and VCP; may form a complex involved in macroautophagy.

Its subcellular location is the cytoplasm. The catalysed reaction is Thiol-dependent hydrolysis of ester, thioester, amide, peptide and isopeptide bonds formed by the C-terminal Gly of ubiquitin (a 76-residue protein attached to proteins as an intracellular targeting signal).. Its function is as follows. Hydrolase that can remove conjugated ubiquitin from proteins and participates in endoplasmic reticulum-associated degradation (ERAD) for misfolded lumenal proteins. May act by triming the ubiquitin chain on the associated substrate to facilitate their threading through the VCP/p97 pore. Ubiquitin moieties on substrates may present a steric impediment to the threading process when the substrate is transferred to the VCP pore and threaded through VCP's axial channel. Mediates deubiquitination of 'Lys-27'-, 'Lys-29'- and 'Lys-33'-linked polyubiquitin chains. Also able to hydrolyze 'Lys-11'-linked ubiquitin chains. Cleaves both polyubiquitin and di-ubiquitin. May play a role in macroautophagy, regulating for instance the clearance of damaged lysosomes. May recruit PLAA, UBXN6 and VCP to damaged lysosome membranes decorated with K48-linked ubiquitin chains and remove these chains allowing autophagosome formation. The polypeptide is Ubiquitin thioesterase OTU1 (Yod1) (Rattus norvegicus (Rat)).